The following is a 592-amino-acid chain: Solute carrier family 13 member 2 (592 aa).

4 helical membrane passes run 13 to 33 (SYLI…LVPS), 53 to 73 (ALPL…MGIV), 86 to 106 (SNLL…WNLH), and 114 to 134 (LLIV…VTAF). Polar residues predominate over residues 165 to 177 (SSNVEEGSNNPTF). The segment at 165–185 (SSNVEEGSNNPTFELQEPSPQ) is disordered. 8 helical membrane-spanning segments follow: residues 221-241 (MSLC…TGTA), 274-294 (MVIL…GFNF), 324-344 (PMTF…LLWF), 371-391 (GTVA…FPGL), 450-470 (PLQS…VATF), 482-502 (IFLP…LYVM), 511-531 (LAFM…FGDL), and 545-565 (IIGV…LFSL).

This sequence belongs to the SLC13A/DASS transporter (TC 2.A.47) family. NADC subfamily. As to expression, expressed in kidney and intestine. In kidney expressed in the proximal tubule (at protein level).

The protein resides in the apical cell membrane. It catalyses the reaction succinate(out) + 3 Na(+)(out) = succinate(in) + 3 Na(+)(in). The catalysed reaction is fumarate(out) + 3 Na(+)(out) = fumarate(in) + 3 Na(+)(in). The enzyme catalyses 2-oxoglutarate(out) + 3 Na(+)(out) = 2-oxoglutarate(in) + 3 Na(+)(in). Its activity is regulated as follows. Li(+) decreases succinate transport in the presence of Na(+), by competing at one of the three cation binding sites. Functionally, low-affinity sodium-dicarboxylate cotransporter, that mediates the entry of citric acid cycle intermediates, such as succinate, citrate, fumarate and alpha-ketoglutarate (2-oxoglutarate) into the small intestine and renal proximal tubule. Transports the dicarboxylate into the cell with a probable stoichiometry of 3 Na(+) for 1 divalent dicarboxylate, rendering the process electrogenic. Citrate is transported in protonated form as a divalent anion, rather than the trivalent form which is normally found in blood. Has a critical role in renal dicarboxylate transport. This chain is Solute carrier family 13 member 2 (SLC13A2), found in Homo sapiens (Human).